Here is a 325-residue protein sequence, read N- to C-terminus: Holliday junction branch migration complex subunit RuvB (325 aa).

The tract at residues Met1–Tyr180 is large ATPase domain (RuvB-L). Residues Leu19, Arg20, Gly61, Lys64, Thr65, Thr66, Glu127 to Phe129, Arg170, Tyr180, and Arg217 contribute to the ATP site. Thr65 serves as a coordination point for Mg(2+). The tract at residues Ser181–Gly251 is small ATPAse domain (RuvB-S). The segment at Lys254–His325 is head domain (RuvB-H). Positions 290, 309, and 314 each coordinate DNA.

The protein belongs to the RuvB family. Homohexamer. Forms an RuvA(8)-RuvB(12)-Holliday junction (HJ) complex. HJ DNA is sandwiched between 2 RuvA tetramers; dsDNA enters through RuvA and exits via RuvB. An RuvB hexamer assembles on each DNA strand where it exits the tetramer. Each RuvB hexamer is contacted by two RuvA subunits (via domain III) on 2 adjacent RuvB subunits; this complex drives branch migration. In the full resolvosome a probable DNA-RuvA(4)-RuvB(12)-RuvC(2) complex forms which resolves the HJ.

Its subcellular location is the cytoplasm. The enzyme catalyses ATP + H2O = ADP + phosphate + H(+). Its function is as follows. The RuvA-RuvB-RuvC complex processes Holliday junction (HJ) DNA during genetic recombination and DNA repair, while the RuvA-RuvB complex plays an important role in the rescue of blocked DNA replication forks via replication fork reversal (RFR). RuvA specifically binds to HJ cruciform DNA, conferring on it an open structure. The RuvB hexamer acts as an ATP-dependent pump, pulling dsDNA into and through the RuvAB complex. RuvB forms 2 homohexamers on either side of HJ DNA bound by 1 or 2 RuvA tetramers; 4 subunits per hexamer contact DNA at a time. Coordinated motions by a converter formed by DNA-disengaged RuvB subunits stimulates ATP hydrolysis and nucleotide exchange. Immobilization of the converter enables RuvB to convert the ATP-contained energy into a lever motion, pulling 2 nucleotides of DNA out of the RuvA tetramer per ATP hydrolyzed, thus driving DNA branch migration. The RuvB motors rotate together with the DNA substrate, which together with the progressing nucleotide cycle form the mechanistic basis for DNA recombination by continuous HJ branch migration. Branch migration allows RuvC to scan DNA until it finds its consensus sequence, where it cleaves and resolves cruciform DNA. This Orientia tsutsugamushi (strain Ikeda) (Rickettsia tsutsugamushi) protein is Holliday junction branch migration complex subunit RuvB.